We begin with the raw amino-acid sequence, 1225 residues long: DNA-directed RNA polymerase subunit beta' (1225 aa).

Zn(2+) contacts are provided by C60, C62, C75, and C78. D450, D452, and D454 together coordinate Mg(2+). Positions 818, 892, 899, and 902 each coordinate Zn(2+).

This sequence belongs to the RNA polymerase beta' chain family. In terms of assembly, the RNAP catalytic core consists of 2 alpha, 1 beta, 1 beta' and 1 omega subunit. When a sigma factor is associated with the core the holoenzyme is formed, which can initiate transcription. The cofactor is Mg(2+). It depends on Zn(2+) as a cofactor.

It catalyses the reaction RNA(n) + a ribonucleoside 5'-triphosphate = RNA(n+1) + diphosphate. DNA-dependent RNA polymerase catalyzes the transcription of DNA into RNA using the four ribonucleoside triphosphates as substrates. In Streptococcus pneumoniae (strain ATCC 700669 / Spain 23F-1), this protein is DNA-directed RNA polymerase subunit beta'.